The primary structure comprises 474 residues: Glutathione synthetase (474 aa).

Residue R125 participates in substrate binding. E144 is an ATP binding site. The Mg(2+) site is built by E144 and N146. Substrate is bound by residues 148 to 151 (IAAS), 214 to 216 (QRN), Q220, and 267 to 270 (RTGY). Residues K305, 364–373 (KPQREGGGNN), Y375, 398–401 (MDKI), and E425 contribute to the ATP site. E368 contacts Mg(2+). Residue R450 participates in substrate binding. Positions 452 and 458 each coordinate ATP. Residue 461-462 (VA) coordinates substrate.

Belongs to the eukaryotic GSH synthase family. As to quaternary structure, homodimer. The cofactor is Mg(2+). Expressed ubiquitously.

The catalysed reaction is gamma-L-glutamyl-L-cysteine + glycine + ATP = glutathione + ADP + phosphate + H(+). The enzyme catalyses gamma-L-glutamyl-(2S)-2-aminobutanoate + glycine + ATP = ophthalmate + ADP + phosphate + H(+). It participates in sulfur metabolism; glutathione biosynthesis; glutathione from L-cysteine and L-glutamate: step 2/2. Its function is as follows. Catalyzes the production of glutathione from gamma-glutamylcysteine and glycine in an ATP-dependent manner. Glutathione (gamma-glutamylcysteinylglycine, GSH) is the most abundant intracellular thiol in living aerobic cells and is required for numerous processes including the protection of cells against oxidative damage, amino acid transport, the detoxification of foreign compounds, the maintenance of protein sulfhydryl groups in a reduced state and acts as a cofactor for a number of enzymes. Participates in ophthalmate biosynthesis in hepatocytes. In Xenopus laevis (African clawed frog), this protein is Glutathione synthetase.